The primary structure comprises 353 residues: Rhodopsin (353 aa).

Residues 1–36 (MNGTEGPYFYIPMVNTTGIVRSPYEYPQYYLVNPAA) are Extracellular-facing. N2 and N15 each carry an N-linked (GlcNAc...) asparagine glycan. Residues 37-61 (YAALGAYMFLLILVGFPVNFLTLYV) form a helical membrane-spanning segment. Topologically, residues 62–73 (TLEHKKLRTPLN) are cytoplasmic. Residues 74 to 96 (YILLNLAVADLFMVLGGFTTTMY) traverse the membrane as a helical segment. Topologically, residues 97–110 (TSMHGYFVLGRLGC) are extracellular. The cysteines at positions 110 and 187 are disulfide-linked. Residues 111 to 133 (NVEGFFATLGGEIALWSLVVLAI) form a helical membrane-spanning segment. The 'Ionic lock' involved in activated form stabilization signature appears at 134-136 (ERW). Residues 134–152 (ERWVVVCKPISNFRFSEDH) are Cytoplasmic-facing. The helical transmembrane segment at 153–173 (AIMGLAFTWVMASACAVPPLV) threads the bilayer. Residues 174–202 (GWSRYIPEGMQCSCGIDYYTRAEGFNNES) lie on the Extracellular side of the membrane. N-linked (GlcNAc...) asparagine glycosylation is present at N200. The chain crosses the membrane as a helical span at residues 203 to 224 (FVIYMFVCHFLIPLVVVFFCYG). The Cytoplasmic segment spans residues 225–252 (RLLCAVKEAAAAQQESETTQRAEREVSR). The helical transmembrane segment at 253-274 (MVVIMVVAFLVCWCPYAGVAWY) threads the bilayer. At 275–286 (IFTHQGSEFGPL) the chain is on the extracellular side. The chain crosses the membrane as a helical span at residues 287–308 (FMTFPAFFAKSSSIYNPMIYIC). An N6-(retinylidene)lysine modification is found at K296. Topologically, residues 309 to 353 (MNKQFRHCMITTLCCGKNPFEEEEGASTTSKTEASSVSSSSVSPA) are cytoplasmic. 2 S-palmitoyl cysteine lipidation sites follow: C322 and C323. Positions 330 to 353 (EEEGASTTSKTEASSVSSSSVSPA) are disordered. A compositionally biased stretch (low complexity) spans 334–353 (ASTTSKTEASSVSSSSVSPA).

This sequence belongs to the G-protein coupled receptor 1 family. Opsin subfamily. In terms of processing, phosphorylated on some or all of the serine and threonine residues present in the C-terminal region. Post-translationally, contains one covalently linked retinal chromophore.

It localises to the membrane. The protein resides in the cell projection. It is found in the cilium. The protein localises to the photoreceptor outer segment. Its function is as follows. Photoreceptor required for image-forming vision at low light intensity. While most salt water fish species use retinal as chromophore, most freshwater fish use 3-dehydroretinal, or a mixture of retinal and 3-dehydroretinal. Light-induced isomerization of 11-cis to all-trans retinal triggers a conformational change that activates signaling via G-proteins. Subsequent receptor phosphorylation mediates displacement of the bound G-protein alpha subunit by arrestin and terminates signaling. The sequence is that of Rhodopsin (rho) from Chelon labrosus (Thicklip grey mullet).